Consider the following 309-residue polypeptide: Ribosomal RNA small subunit methyltransferase H (309 aa).

S-adenosyl-L-methionine is bound by residues 33–35, aspartate 53, phenylalanine 79, aspartate 100, and glutamine 107; that span reads GGH.

This sequence belongs to the methyltransferase superfamily. RsmH family.

Its subcellular location is the cytoplasm. The catalysed reaction is cytidine(1402) in 16S rRNA + S-adenosyl-L-methionine = N(4)-methylcytidine(1402) in 16S rRNA + S-adenosyl-L-homocysteine + H(+). Functionally, specifically methylates the N4 position of cytidine in position 1402 (C1402) of 16S rRNA. The sequence is that of Ribosomal RNA small subunit methyltransferase H from Clostridium botulinum (strain Loch Maree / Type A3).